A 704-amino-acid chain; its full sequence is Elongation factor G (704 aa).

The 277-residue stretch at 9–285 folds into the tr-type G domain; sequence AKVRNIGIMA…AIVAYLPSPL (277 aa). GTP contacts are provided by residues 18–25, 82–86, and 136–139; these read AHIDAGKT, DTPGH, and NKMD.

This sequence belongs to the TRAFAC class translation factor GTPase superfamily. Classic translation factor GTPase family. EF-G/EF-2 subfamily.

It localises to the cytoplasm. Catalyzes the GTP-dependent ribosomal translocation step during translation elongation. During this step, the ribosome changes from the pre-translocational (PRE) to the post-translocational (POST) state as the newly formed A-site-bound peptidyl-tRNA and P-site-bound deacylated tRNA move to the P and E sites, respectively. Catalyzes the coordinated movement of the two tRNA molecules, the mRNA and conformational changes in the ribosome. The protein is Elongation factor G of Thermobifida fusca (strain YX).